Reading from the N-terminus, the 671-residue chain is uncharacterized protein (671 aa).

Residues 39–56 (ATVTVVILLLILLLGWGY) form a helical membrane-spanning segment.

The protein localises to the membrane. This is an uncharacterized protein from Treponema pallidum (strain Nichols).